Reading from the N-terminus, the 76-residue chain is Conotoxin VnMKLT2-013 (76 aa).

Positions 1–23 (MMKLTCVLIIAVLFLTACQLTTA) are cleaved as a signal peptide. Positions 24-42 (ETRDEYRAVRSSDEVQNSR) are excised as a propeptide. The segment at 29-49 (YRAVRSSDEVQNSRSTDDCST) is disordered. 3 disulfide bridges follow: Cys-47/Cys-58, Cys-52/Cys-63, and Cys-57/Cys-72.

The protein belongs to the conotoxin O1 superfamily. In terms of tissue distribution, expressed by the venom duct.

It localises to the secreted. This chain is Conotoxin VnMKLT2-013, found in Conus ventricosus (Mediterranean cone).